The chain runs to 632 residues: MAU2 chromatid cohesion factor homolog (632 aa).

TPR repeat units lie at residues 453–486 (GGFY…ANAE) and 493–526 (SCSL…ASKI).

The protein belongs to the SCC4/mau-2 family. As to quaternary structure, interacts with Nipped-B to form the cohesin loading complex.

Its subcellular location is the nucleus. The protein localises to the nucleoplasm. In terms of biological role, required for association of the cohesin complex with chromatin during interphase. Plays a role in sister chromatid cohesion and normal progression through prometaphase. This Drosophila simulans (Fruit fly) protein is MAU2 chromatid cohesion factor homolog.